Reading from the N-terminus, the 128-residue chain is Calcitonin gene-related peptide 1 (128 aa).

Positions 1–25 are cleaved as a signal peptide; that stretch reads MGFQKFSPFLALSILVLLQAGSLHA. A propeptide spanning residues 26 to 80 is cleaved from the precursor; that stretch reads APFRSALESSPADPATLSEDEARLLLAALVQDYVQMKASELEQEQEREGSRIIAQ. A disulfide bridge connects residues C84 and C89. Phenylalanine amide is present on F119. Residues 125–128 constitute a propeptide that is removed on maturation; it reads DLQA.

The protein belongs to the calcitonin family. Expressed in spinal cord.

The protein localises to the secreted. CGRP1/CALCA is a peptide hormone that induces vasodilation mediated by the CALCRL-RAMP1 receptor complex. Dilates a variety of vessels including the coronary, cerebral and systemic vasculature. Its abundance in the CNS also points toward a neurotransmitter or neuromodulator role. It also elevates platelet cAMP. CGRP1 can also bind and activate CALCR-RAMP1 (AMYR1) receptor complex. The chain is Calcitonin gene-related peptide 1 from Homo sapiens (Human).